Consider the following 679-residue polypeptide: Penicillin-binding protein 1A (679 aa).

Residues 1–14 (MTERKREHKDRKQN) show a composition bias toward basic residues. A disordered region spans residues 1–20 (MTERKREHKDRKQNKNSPKN). The Cytoplasmic portion of the chain corresponds to 1–30 (MTERKREHKDRKQNKNSPKNQSKVTKFLKW). The helical; Signal-anchor for type II membrane protein transmembrane segment at 31 to 51 (FFIGILLLGITAVTVVGIYVL) threads the bilayer. At 52–679 (SIIRSSPELD…QYKEVDNLVE (628 aa)) the chain is on the extracellular side. Positions 72-244 (SILYDDQGNF…PTSYDGLSEA (173 aa)) are transglycosylase. Residue Glu-111 is the Proton donor; for transglycosylase activity of the active site. Residues 378–663 (ASATIIDYKT…TSPIFGKIMG (286 aa)) are transpeptidase. Catalysis depends on Ser-417, which acts as the Acyl-ester intermediate; for transpeptidase activity.

In the N-terminal section; belongs to the glycosyltransferase 51 family. This sequence in the C-terminal section; belongs to the transpeptidase family.

The protein localises to the cell membrane. The enzyme catalyses [GlcNAc-(1-&gt;4)-Mur2Ac(oyl-L-Ala-gamma-D-Glu-L-Lys-D-Ala-D-Ala)](n)-di-trans,octa-cis-undecaprenyl diphosphate + beta-D-GlcNAc-(1-&gt;4)-Mur2Ac(oyl-L-Ala-gamma-D-Glu-L-Lys-D-Ala-D-Ala)-di-trans,octa-cis-undecaprenyl diphosphate = [GlcNAc-(1-&gt;4)-Mur2Ac(oyl-L-Ala-gamma-D-Glu-L-Lys-D-Ala-D-Ala)](n+1)-di-trans,octa-cis-undecaprenyl diphosphate + di-trans,octa-cis-undecaprenyl diphosphate + H(+). It carries out the reaction Preferential cleavage: (Ac)2-L-Lys-D-Ala-|-D-Ala. Also transpeptidation of peptidyl-alanyl moieties that are N-acyl substituents of D-alanine.. Its pathway is cell wall biogenesis; peptidoglycan biosynthesis. In terms of biological role, cell wall formation. Synthesis of cross-linked peptidoglycan from the lipid intermediates. The enzyme has a penicillin-insensitive transglycosylase N-terminal domain (formation of linear glycan strands) and a penicillin-sensitive transpeptidase C-terminal domain (cross-linking of the peptide subunits). The polypeptide is Penicillin-binding protein 1A (pbpA) (Clostridium perfringens (strain 13 / Type A)).